The sequence spans 342 residues: tRNA N6-adenosine threonylcarbamoyltransferase (342 aa).

Fe cation contacts are provided by His-111 and His-115. Substrate-binding positions include 134 to 138, Asp-167, Gly-180, and Asn-277; that span reads LVSGG. Asp-305 serves as a coordination point for Fe cation.

This sequence belongs to the KAE1 / TsaD family. The cofactor is Fe(2+).

It localises to the cytoplasm. It catalyses the reaction L-threonylcarbamoyladenylate + adenosine(37) in tRNA = N(6)-L-threonylcarbamoyladenosine(37) in tRNA + AMP + H(+). Required for the formation of a threonylcarbamoyl group on adenosine at position 37 (t(6)A37) in tRNAs that read codons beginning with adenine. Is involved in the transfer of the threonylcarbamoyl moiety of threonylcarbamoyl-AMP (TC-AMP) to the N6 group of A37, together with TsaE and TsaB. TsaD likely plays a direct catalytic role in this reaction. The polypeptide is tRNA N6-adenosine threonylcarbamoyltransferase (Cellvibrio japonicus (strain Ueda107) (Pseudomonas fluorescens subsp. cellulosa)).